Consider the following 922-residue polypeptide: Two-component sensor PprA (922 aa).

Over residues 1–10 (MFEFSRSSSA) the composition is skewed to low complexity. A disordered region spans residues 1–22 (MFEFSRSSSAEAERPEPFSQEG). The PAC 1 domain maps to 506–558 (VKTRYRLADGQGNWHWLYDEAKLLRDAQGLPSEAVGLWLDVTEQHLAAQRIAE). Residues 559 to 622 (SEERYRVLVE…EDASALRARL (64 aa)) form the PAS domain. Positions 632–684 (EVPELRFNLPGQRFLWLVWAERPLFDARGELCEVQAVGRDNTPVRRAQQQLAQ) constitute a PAC 2 domain. The 220-residue stretch at 697–916 (GLAHEVKQPL…LFVVRLPLAA (220 aa)) folds into the Histidine kinase domain. His700 carries the phosphohistidine; by autocatalysis modification.

In terms of processing, autophosphorylated.

It catalyses the reaction ATP + protein L-histidine = ADP + protein N-phospho-L-histidine.. Functionally, member of the two-component regulatory system PprA/PprB involved in biofilm formation by controlling the expression of many related genes including type IVb pili major subunit flp pilin, adhesin bapA or cupE fimbriae. Functions as a heme sensor histidine kinase which is autophosphorylated at a histidine residue and transfers its phosphate group to PprB. This Pseudomonas aeruginosa (strain ATCC 15692 / DSM 22644 / CIP 104116 / JCM 14847 / LMG 12228 / 1C / PRS 101 / PAO1) protein is Two-component sensor PprA.